Consider the following 978-residue polypeptide: Mast/stem cell growth factor receptor Kit (978 aa).

The N-terminal stretch at Met1–Ser25 is a signal peptide. Over Gln26 to Pro525 the chain is Extracellular. Ig-like C2-type domains lie at Pro27 to Arg112, Asp121 to Arg205, Pro212 to Val309, Pro318 to Asn411, and Pro414 to Ala508. Residues Cys58 and Cys97 are joined by a disulfide bond. N-linked (GlcNAc...) asparagine glycosylation is found at Asn94, Asn130, and Asn145. Intrachain disulfides connect Cys136/Cys186, Cys151/Cys183, and Cys233/Cys291. N-linked (GlcNAc...) asparagine glycans are attached at residues Asn284, Asn294, Asn301, Asn321, Asn353, Asn368, Asn401, Asn464, and Asn487. Residues Cys429 and Cys492 are joined by a disulfide bond. The helical transmembrane segment at Leu526 to Tyr546 threads the bilayer. The Cytoplasmic portion of the chain corresponds to Lys547–Val978. Phosphotyrosine is present on residues Tyr548 and Tyr554. Tyr569 provides a ligand contact to Mg(2+). Phosphotyrosine; by autocatalysis is present on residues Tyr569 and Tyr571. The segment at Tyr569–Tyr571 is important for interaction with phosphotyrosine-binding proteins. The region spanning Leu590 to Ser939 is the Protein kinase domain. Residues Gly597 to Val604, Lys624, and Glu672 to Asp678 contribute to the ATP site. Phosphotyrosine; by autocatalysis occurs at positions 704 and 722. A Phosphotyrosine modification is found at Tyr731. 2 positions are modified to phosphoserine; by PKC/PRKCA: Ser743 and Ser748. Asp794 functions as the Proton acceptor in the catalytic mechanism. Arg798 lines the ATP pocket. Asn799 and Asp812 together coordinate Mg(2+). A Phosphoserine modification is found at Ser823. Tyr825 is subject to Phosphotyrosine; by autocatalysis. Position 893 is a phosphoserine (Ser893). The residue at position 902 (Tyr902) is a Phosphotyrosine. Tyr938 carries the post-translational modification Phosphotyrosine; by autocatalysis. Residue Ser961 is modified to Phosphoserine.

The protein belongs to the protein kinase superfamily. Tyr protein kinase family. CSF-1/PDGF receptor subfamily. As to quaternary structure, monomer in the absence of bound KITLG/SCF. Homodimer in the presence of bound KITLG/SCF, forming a heterotetramer with two KITLG/SCF molecules. Interacts (via phosphorylated tyrosine residues) with the adapter proteins GRB2 and GRB7 (via SH2 domain), and SH2B2/APS. Interacts (via C-terminus) with MPDZ (via the tenth PDZ domain). Interacts (via phosphorylated tyrosine residues) with PIK3R1 and PIK3CD. Interacts (via phosphorylated tyrosine) with CRK (isoform Crk-II), FYN, SHC1 and MATK/CHK (via SH2 domain). Interacts with LYN and FES/FPS. Interacts (via phosphorylated tyrosine residues) with the protein phosphatases PTPN6/SHP-1 (via SH2 domain), PTPN11/SHP-2 (via SH2 domain) and PTPRU. Interacts with PLCG1. Interacts with DOK1 and TEC. Interacts with IL1RAP (independent of stimulation with KITLG/SCF). A mast cell-specific KITLG/SCF-induced interleukin-33 signaling complex contains IL1RL1, IL1RAP, KIT and MYD88. In terms of processing, ubiquitinated by SOCS6. KIT is rapidly ubiquitinated after autophosphorylation induced by KITLG/SCF binding, leading to internalization and degradation. Autophosphorylated on tyrosine residues. KITLG/SCF binding promotes autophosphorylation. Phosphorylated tyrosine residues are important for interaction with specific binding partners.

It localises to the cell membrane. It carries out the reaction L-tyrosyl-[protein] + ATP = O-phospho-L-tyrosyl-[protein] + ADP + H(+). With respect to regulation, present in an inactive conformation in the absence of bound ligand. KITLG/SCF binding leads to dimerization and activation by autophosphorylation on tyrosine residues. Activity is down-regulated by PRKCA-mediated phosphorylation on serine residues. Its function is as follows. Tyrosine-protein kinase that acts as a cell-surface receptor for the cytokine KITLG/SCF and plays an essential role in the regulation of cell survival and proliferation, hematopoiesis, stem cell maintenance, gametogenesis, mast cell development, migration and function, and in melanogenesis. In response to KITLG/SCF binding, KIT can activate several signaling pathways. Phosphorylates PIK3R1, PLCG1, SH2B2/APS and CBL. Activates the AKT1 signaling pathway by phosphorylation of PIK3R1, the regulatory subunit of phosphatidylinositol 3-kinase. Activated KIT also transmits signals via GRB2 and activation of RAS, RAF1 and the MAP kinases MAPK1/ERK2 and/or MAPK3/ERK1. Promotes activation of STAT family members STAT1, STAT3, STAT5A and STAT5B. Activation of PLCG1 leads to the production of the cellular signaling molecules diacylglycerol and inositol 1,4,5-trisphosphate. KIT signaling is modulated by protein phosphatases, and by rapid internalization and degradation of the receptor. Activated KIT promotes phosphorylation of the protein phosphatases PTPN6/SHP-1 and PTPRU, and of the transcription factors STAT1, STAT3, STAT5A and STAT5B. Promotes phosphorylation of PIK3R1, CBL, CRK (isoform Crk-II), LYN, MAPK1/ERK2 and/or MAPK3/ERK1, PLCG1, SRC and SHC1. In Capra hircus (Goat), this protein is Mast/stem cell growth factor receptor Kit (KIT).